The primary structure comprises 974 residues: Phosphoenolpyruvate carboxylase 1 (974 aa).

Catalysis depends on residues histidine 164 and lysine 604.

It belongs to the PEPCase type 1 family. As to quaternary structure, exists as a homotetramer or heterooligomer. It depends on Mg(2+) as a cofactor.

It localises to the cytoplasm. The catalysed reaction is oxaloacetate + phosphate = phosphoenolpyruvate + hydrogencarbonate. Activated by glutamine and dihydroxyacetone phosphate. Inhibited by glutamate, aspartate, 2-oxoglutarate and malate. In terms of biological role, through the carboxylation of phosphoenolpyruvate (PEP) it forms oxaloacetate, a four-carbon dicarboxylic acid source for the tricarboxylic acid cycle. The chain is Phosphoenolpyruvate carboxylase 1 from Chlamydomonas reinhardtii (Chlamydomonas smithii).